Consider the following 172-residue polypeptide: Small ribosomal subunit protein uS5 (172 aa).

In terms of domain architecture, S5 DRBM spans 16-79; sequence LKEKLVHINR…EDGKKNVIKV (64 aa).

Belongs to the universal ribosomal protein uS5 family. Part of the 30S ribosomal subunit. Contacts proteins S4 and S8.

In terms of biological role, with S4 and S12 plays an important role in translational accuracy. Located at the back of the 30S subunit body where it stabilizes the conformation of the head with respect to the body. The protein is Small ribosomal subunit protein uS5 of Pelodictyon phaeoclathratiforme (strain DSM 5477 / BU-1).